The following is a 638-amino-acid chain: MGKIIGIDLGTTNSCVAVMEGKETKVIPNAEGARTTPSIVAYADDGEVLVGDSAKRQAVTNPENTLFAIKRLIGRRADDAVVEKDKDMVSYKIIAADNGDAWVQVGDKKLSPQEVSARTLMKMKKTAEDYLGHEVTEAVITVPAYFNDSQRQATKDAGKIAGLEVKRIINEPTAAALAYGMDKVKADSKIAVYDLGGGTFDISIIEVADLDGEKQVEVLSTNGDTFLGGEDFDNVIVDYIATEFKKDQNVDLKLDKLALQRVREAAEKAKIELSSREQTDINLPYVTADATGPKHLNMKITRAKFESLIEGLVQRSIDPCKTALKDAGLSASEIDDVILVGGSTRVPMVQAAVKEFFGKEPRKDVNPDEAVAMGAAIQGGVLSGDVNDVLLLDVTPLSLGIETMGGVMTKLIEKNTTIPTRKSQTFSTAEDNQSAVTIHVLQGEREVSSGNKSLGQFNLDEIPPAPRGTPQIEVTFDIDANGILNVSAKDKATNKEQHITIQASSGLSEDEIEAMVKDAEAHAAEDAKLKELVEARNQADAMVHGTKKLLDEQGEGVEAAEKEAIEKAIADLEEAIKGDDKAVIDEKTQALATASQKLAEKAYAQPGAEAGAEQQGSANNADDDIVDAEFEEVNDDKK.

Phosphothreonine; by autocatalysis is present on T199. Low complexity predominate over residues 603 to 618 (YAQPGAEAGAEQQGSA). The segment at 603-638 (YAQPGAEAGAEQQGSANNADDDIVDAEFEEVNDDKK) is disordered. Residues 621–638 (ADDDIVDAEFEEVNDDKK) show a composition bias toward acidic residues.

Belongs to the heat shock protein 70 family.

Acts as a chaperone. This Hydrogenovibrio crunogenus (strain DSM 25203 / XCL-2) (Thiomicrospira crunogena) protein is Chaperone protein DnaK.